We begin with the raw amino-acid sequence, 167 residues long: Large ribosomal subunit protein uL23 (167 aa).

A large ribosomal subunit protein uL23 region spans residues 1 to 118 (MNVNEIIKGP…TEEKAKIAKK (118 aa)). Disordered regions lie at residues 91-112 (FEDESPQDQKDSETVSENTEEK) and 136-167 (KQAELAKKDSETNENQEKRIENQTENQENSAN). 2 stretches are compositionally biased toward basic and acidic residues: residues 97-112 (QDQKDSETVSENTEEK) and 136-157 (KQAELAKKDSETNENQEKRIEN). The tract at residues 119 to 167 (KAELEAKNKEIAEKLAKKQAELAKKDSETNENQEKRIENQTENQENSAN) is unknown. Residues 158-167 (QTENQENSAN) show a composition bias toward polar residues.

Belongs to the universal ribosomal protein uL23 family. As to quaternary structure, part of the 50S ribosomal subunit. Contacts protein L29, and trigger factor when it is bound to the ribosome.

Functionally, one of the early assembly proteins it binds 23S rRNA. One of the proteins that surrounds the polypeptide exit tunnel on the outside of the ribosome. Forms the main docking site for trigger factor binding to the ribosome. The chain is Large ribosomal subunit protein uL23 from Mesomycoplasma hyopneumoniae (strain J / ATCC 25934 / NCTC 10110) (Mycoplasma hyopneumoniae).